The chain runs to 466 residues: MSLRFYDTRTRQVRDFVPLREGCVSLYLCGATVQAPPHIGHIRSGVSFDILRRWLMYRGYRVIFCRNVTDIDDKILNVAASEGVQWWEVSERNYRAFAEAYDTLGCLPPTVEPRATGHIPEMIELMRRLIDRGHAYVAEDGSGDVYFDVTSYAEYGSLSNQRLEEMRAAEDGDARAKRDPRDFALWKGARPGEPSWPTPWGPGRPGWHLECSAMATKYLGPTFDIHGGGVDLVFPHHENESAQSRAAGDGFARYWLHNGLLTTGGEKMSKSLGNSLLIPEITRRVRPVELRYYLGQAHYRSNLDYSEESLREAASAYQRLENFLVRVNEIAGPIPDDVPVPEEFAAALDDDLGVPQALAVAHNHVREGNSALAEGAKERAAQIGARLRAMLAVLGLDPLSPQWAGSDDSGLHDVVDSLVSVVLEQRQEARKRKDYATADRIRDQLAEMGIAVEDTPQGPRWELKRS.

C29 is a binding site for Zn(2+). The short motif at 31–41 is the 'HIGH' region element; that stretch reads ATVQAPPHIGH. C211, H236, and E240 together coordinate Zn(2+). The 'KMSKS' region signature appears at 267-271; sequence KMSKS. K270 lines the ATP pocket.

This sequence belongs to the class-I aminoacyl-tRNA synthetase family. Monomer. It depends on Zn(2+) as a cofactor.

It localises to the cytoplasm. It catalyses the reaction tRNA(Cys) + L-cysteine + ATP = L-cysteinyl-tRNA(Cys) + AMP + diphosphate. This Thermobifida fusca (strain YX) protein is Cysteine--tRNA ligase.